We begin with the raw amino-acid sequence, 57 residues long: Small ribosomal subunit protein bS21 (57 aa).

Residues 35–57 (REFYEKPSVRRKKKSEAARKRKY) form a disordered region. Positions 43 to 57 (VRRKKKSEAARKRKY) are enriched in basic residues.

It belongs to the bacterial ribosomal protein bS21 family.

This chain is Small ribosomal subunit protein bS21, found in Bacillus licheniformis (strain ATCC 14580 / DSM 13 / JCM 2505 / CCUG 7422 / NBRC 12200 / NCIMB 9375 / NCTC 10341 / NRRL NRS-1264 / Gibson 46).